We begin with the raw amino-acid sequence, 379 residues long: Ribokinase (379 aa).

Residues 78-80, 106-110, and Glu210 contribute to the substrate site; these read NAD and GKGAN. ATP-binding positions include Asn255 and 291–296; that span reads KLGSKG. K(+) contacts are provided by Asp319 and Thr321. Position 324 to 325 (324 to 325) interacts with ATP; it reads GD. Asp325 contacts substrate. Asp325 serves as the catalytic Proton acceptor. Residues Cys355, Val358, Gly360, and Ser364 each contribute to the K(+) site.

It belongs to the carbohydrate kinase PfkB family. Ribokinase subfamily. Homodimer. Requires Mg(2+) as cofactor.

The protein localises to the plastid. Its subcellular location is the chloroplast stroma. The protein resides in the chloroplast nucleoid. The catalysed reaction is D-ribose + ATP = D-ribose 5-phosphate + ADP + H(+). It participates in carbohydrate metabolism; D-ribose degradation; D-ribose 5-phosphate from beta-D-ribopyranose: step 2/2. Activated by a monovalent cation that binds near, but not in, the active site. The most likely occupant of the site in vivo is potassium. Ion binding induces a conformational change that may alter substrate affinity. Repressed by calcium, rubidium and sodium. Substrate inhibition is observed in the presence of high ATP concentration (Ki=2.44 mM). Functionally, catalyzes the phosphorylation of ribose at O-5 in a reaction requiring ATP and magnesium. The resulting D-ribose-5-phosphate can then be used either for sythesis of nucleotides, histidine, and tryptophan, or as a component of the pentose phosphate pathway. Can also use xylose and fructose as carbohydrate substrates with a low efficiency. Can use GTP, and, to a lower extent, CTP and UTP as alternative phosphoryl donors. This chain is Ribokinase, found in Arabidopsis thaliana (Mouse-ear cress).